Here is a 1491-residue protein sequence, read N- to C-terminus: Pleckstrin homology domain-containing family H member 2 (1491 aa).

Residues 19–177 (ALEAQLMKFR…ELQEKKISCV (159 aa)) adopt a coiled-coil conformation. Disordered regions lie at residues 232–435 (AEKP…PFQP), 506–546 (DDGL…LHRF), and 612–668 (SSSP…SDYA). Residues 253–264 (TSCSSEQNQKTR) are compositionally biased toward polar residues. Residues 374–385 (KEQDSSSDELNK) show a composition bias toward basic and acidic residues. Residues 392–406 (LDYTSSSSEANTPSP) are compositionally biased toward polar residues. The segment covering 657-666 (SDSSAASESD) has biased composition (low complexity). PH domains follow at residues 702–796 (PLEK…SVLR) and 810–918 (KPAV…VAAG). In terms of domain architecture, MyTH4 spans 954–1109 (HSKEGILSPL…PSRMEILSTL (156 aa)). Residues 1120-1449 (FSIPVHFMNG…SYINSFHQQK (330 aa)) enclose the FERM domain. A disordered region spans residues 1466–1491 (QAPQARVMGSQPPLSNSRPTKGPTLL).

Self-associates. Interacts with TGFB1I1. As to expression, expressed in the kidney and testis. Expressed in the kidney exclusively by glomerular podocytes.

It localises to the cytoplasm. It is found in the cytoskeleton. The protein localises to the cell membrane. Its subcellular location is the cell projection. The protein resides in the lamellipodium. Its function is as follows. In the kidney glomerulus may play a role in linking podocyte foot processes to the glomerular basement membrane. May be involved in stabilization of F-actin by attenuating its depolymerization. Can recruit TGFB1I1 from focal adhesions to podocyte lamellipodia. In Mus musculus (Mouse), this protein is Pleckstrin homology domain-containing family H member 2 (Plekhh2).